Consider the following 215-residue polypeptide: CASP-like protein 1E1 (215 aa).

At 1–51 (MESSRGKPGLNGSGGGAAAFDYSSRRGYYTGAGAALPPLAAGSRAPPVDPC) the chain is on the cytoplasmic side. Residues 52-72 (CVALRVFVLLGTLASAVVMAA) traverse the membrane as a helical segment. Residues 73–103 (DRQSTTVQIAAGEQLAPPLRVPVTAKWTYSS) are Extracellular-facing. Residues 104 to 124 (AFVYFVVANAMVFAFSAAALA) traverse the membrane as a helical segment. Residues 125-130 (AVRRRS) are Cytoplasmic-facing. The helical transmembrane segment at 131-151 (AVVPVMVGDLVAMALLFSAVG) threads the bilayer. Over 152 to 185 (AAAQFGLLGERGNAHVRWAKVCDVYGPFCERAMA) the chain is Extracellular. The helical transmembrane segment at 186–206 (AVVVALIAAFADLVLLMLTIL) threads the bilayer. Residues 207–215 (TIHKASSYY) are Cytoplasmic-facing.

It belongs to the Casparian strip membrane proteins (CASP) family. Homodimer and heterodimers.

The protein localises to the cell membrane. In Oryza sativa subsp. indica (Rice), this protein is CASP-like protein 1E1.